The sequence spans 577 residues: 5'-nucleotidase (577 aa).

A signal peptide spans 1 to 30 (MPRVPSASATGSSALLSLLCAFSLGRAAPF). Residues Asp39, His41, Asp86, and Asn118 each contribute to the Zn(2+) site. N-linked (GlcNAc...) asparagine glycosylation occurs at Asn135. Zn(2+)-binding residues include His221 and His244. Asn246 contacts substrate. N-linked (GlcNAc...) asparagine glycosylation is found at Asn311 and Asn347. Cystine bridges form between Cys353-Cys358 and Cys365-Cys387. Arg354 provides a ligand contact to substrate. Gln390 and Arg395 together coordinate substrate. Asn403 carries N-linked (GlcNAc...) asparagine glycosylation. Phe417 provides a ligand contact to substrate. Cysteines 476 and 479 form a disulfide. 500–506 (YIAEGGD) lines the substrate pocket. A lipid anchor (GPI-anchor amidated serine) is attached at Ser552. A propeptide spans 553–577 (ATLPIINLKIGLSLFAFLTWFLHCS) (removed in mature form).

Belongs to the 5'-nucleotidase family. In terms of assembly, homodimer. It depends on Zn(2+) as a cofactor.

The protein localises to the cell membrane. It carries out the reaction a ribonucleoside 5'-phosphate + H2O = a ribonucleoside + phosphate. Hydrolyzes extracellular nucleotides into membrane permeable nucleosides. The sequence is that of 5'-nucleotidase from Diplobatis ommata (Ocellated electric ray).